Consider the following 429-residue polypeptide: Histidine--tRNA ligase (429 aa).

It belongs to the class-II aminoacyl-tRNA synthetase family. As to quaternary structure, homodimer.

Its subcellular location is the cytoplasm. It catalyses the reaction tRNA(His) + L-histidine + ATP = L-histidyl-tRNA(His) + AMP + diphosphate + H(+). This is Histidine--tRNA ligase from Streptococcus pneumoniae serotype 19F (strain G54).